Reading from the N-terminus, the 227-residue chain is KH domain-containing protein MJ0443 (227 aa).

2 KH domains span residues 14-77 and 106-163; these read KSIE…RDIV and DYAS…KEAV.

The polypeptide is KH domain-containing protein MJ0443 (Methanocaldococcus jannaschii (strain ATCC 43067 / DSM 2661 / JAL-1 / JCM 10045 / NBRC 100440) (Methanococcus jannaschii)).